The following is a 360-amino-acid chain: Aspartate beta-hydroxylase domain-containing protein 1 (360 aa).

The Cytoplasmic portion of the chain corresponds to 1-45 (MWKGGNQEAVIEGSGGELGVPGSWGLQDAACHLARASLPIMFPWP). The chain crosses the membrane as a helical span at residues 46–68 (LPLGSSALTMLLGALTSLFLWYC). Topologically, residues 69–360 (YRLGSQDMQA…ALDFVFAPDP (292 aa)) are lumenal.

The protein belongs to the aspartyl/asparaginyl beta-hydroxylase family.

The protein localises to the membrane. The chain is Aspartate beta-hydroxylase domain-containing protein 1 (Asphd1) from Mus musculus (Mouse).